Here is a 544-residue protein sequence, read N- to C-terminus: CTP synthase (544 aa).

The amidoligase domain stretch occupies residues 1–266; it reads MTKFIFVTGG…DDLICERFGL (266 aa). CTP is bound at residue S13. S13 serves as a coordination point for UTP. ATP is bound by residues 14–19 and D71; that span reads SLGKGI. Positions 71 and 140 each coordinate Mg(2+). Residues 147-149, 187-192, and K223 contribute to the CTP site; these read DIE and KTKPTQ. UTP is bound by residues 187–192 and K223; that span reads KTKPTQ. Residues 291–543 enclose the Glutamine amidotransferase type-1 domain; the sequence is TVAMVGKYVE…VKAAKNYSEA (253 aa). G354 is an L-glutamine binding site. C381 serves as the catalytic Nucleophile; for glutamine hydrolysis. Residues 382–385, E404, and R471 contribute to the L-glutamine site; that span reads LGMQ. Catalysis depends on residues H516 and E518.

It belongs to the CTP synthase family. Homotetramer.

It catalyses the reaction UTP + L-glutamine + ATP + H2O = CTP + L-glutamate + ADP + phosphate + 2 H(+). The catalysed reaction is L-glutamine + H2O = L-glutamate + NH4(+). It carries out the reaction UTP + NH4(+) + ATP = CTP + ADP + phosphate + 2 H(+). Its pathway is pyrimidine metabolism; CTP biosynthesis via de novo pathway; CTP from UDP: step 2/2. Its activity is regulated as follows. Allosterically activated by GTP, when glutamine is the substrate; GTP has no effect on the reaction when ammonia is the substrate. The allosteric effector GTP functions by stabilizing the protein conformation that binds the tetrahedral intermediate(s) formed during glutamine hydrolysis. Inhibited by the product CTP, via allosteric rather than competitive inhibition. Functionally, catalyzes the ATP-dependent amination of UTP to CTP with either L-glutamine or ammonia as the source of nitrogen. Regulates intracellular CTP levels through interactions with the four ribonucleotide triphosphates. This Psychrobacter arcticus (strain DSM 17307 / VKM B-2377 / 273-4) protein is CTP synthase.